A 546-amino-acid chain; its full sequence is Membrane protein insertase YidC (546 aa).

The helical transmembrane segment at 8 to 28 threads the bilayer; the sequence is ILLATVLSVGILILWQVIFPT. The interval 31 to 70 is disordered; the sequence is APPKPAHPPAAEVAKPAAPASPAPGAAAPAVPAPPPDAPE. The segment covering 39 to 60 has biased composition (low complexity); it reads PAAEVAKPAAPASPAPGAAAPA. The next 5 membrane-spanning stretches (helical) occupy residues 326–346, 356–376, 422–442, 459–479, and 498–518; these read IDYG…LYVM, WGVA…PLTY, LGGC…YAAL, LTAH…SFVM, and FFPG…TLYI.

This sequence belongs to the OXA1/ALB3/YidC family. Type 1 subfamily. As to quaternary structure, interacts with the Sec translocase complex via SecD. Specifically interacts with transmembrane segments of nascent integral membrane proteins during membrane integration.

The protein resides in the cell inner membrane. Required for the insertion and/or proper folding and/or complex formation of integral membrane proteins into the membrane. Involved in integration of membrane proteins that insert both dependently and independently of the Sec translocase complex, as well as at least some lipoproteins. Aids folding of multispanning membrane proteins. This is Membrane protein insertase YidC from Anaeromyxobacter dehalogenans (strain 2CP-1 / ATCC BAA-258).